A 253-amino-acid polypeptide reads, in one-letter code: MFEDLKPHLQELRKRLMVSVGTILVAFLGCFHFWKSIFEFVKNSYKGTLIQLSPIEGVMVAVKISFSAAIVISMPIIFWQLWLFIAPGLYKNEKKVILPFVFFGSGMFLIGAAFSYYVVFPFIIEYLATFGSDVFAANISASSYVSFFTRLILGFGVAFELPVLAYFLAKVGLITDASLKAYFKYAIVVIFIVAAIITPPDVVSQIFMALPLVGLYGLSILIAKMVNPAPKDNENNNENNNENNTKENTKSES.

Helical transmembrane passes span 18–38 (VSVG…KSIF), 69–89 (AIVI…APGL), 96–116 (VILP…AFSY), 151–171 (LILG…LAKV), 187–207 (IVVI…SQIF), and 208–228 (MALP…MVNP). Positions 231-253 (KDNENNNENNNENNTKENTKSES) are disordered. A compositionally biased stretch (basic and acidic residues) spans 244 to 253 (NTKENTKSES).

It belongs to the TatC family. As to quaternary structure, the Tat system comprises two distinct complexes: a TatABC complex, containing multiple copies of TatA, TatB and TatC subunits, and a separate TatA complex, containing only TatA subunits. Substrates initially bind to the TatABC complex, which probably triggers association of the separate TatA complex to form the active translocon.

The protein resides in the cell inner membrane. Functionally, part of the twin-arginine translocation (Tat) system that transports large folded proteins containing a characteristic twin-arginine motif in their signal peptide across membranes. Together with TatB, TatC is part of a receptor directly interacting with Tat signal peptides. This is Sec-independent protein translocase protein TatC from Helicobacter pylori (strain ATCC 700392 / 26695) (Campylobacter pylori).